Here is a 566-residue protein sequence, read N- to C-terminus: Phosphatidylinositol 4-kinase gamma 4 (566 aa).

2 Ubiquitin-like domains span residues 34 to 111 (TIMI…SDLQ) and 112 to 190 (VLDV…AKVR). Polar residues predominate over residues 250-263 (DGLKSGNSPVRSSE). Positions 250-272 (DGLKSGNSPVRSSEGTGGAYFMQ) are disordered. Residues 255–547 (GNSPVRSSEG…AVLPGTSEAA (293 aa)) form the PI3K/PI4K catalytic domain. The segment at 261 to 267 (SSEGTGG) is G-loop. ATP contacts are provided by residues 262 to 268 (SEGTGGA), K284, and 374 to 377 (QMFT). The interval 407–415 (ANADRHGGN) is catalytic loop. The segment at 430–456 (PIDHGYCLPESFEDCTFEWLYWPQARK) is activation loop. D432 provides a ligand contact to ATP.

The protein belongs to the PI3/PI4-kinase family. Type II PI4K subfamily. As to quaternary structure, interacts with RPN10, UFD1 and CDC48 in vitro. Autophosphorylated.

It is found in the membrane. It catalyses the reaction a 1,2-diacyl-sn-glycero-3-phospho-(1D-myo-inositol) + ATP = a 1,2-diacyl-sn-glycero-3-phospho-(1D-myo-inositol 4-phosphate) + ADP + H(+). In terms of biological role, the phosphorylation of phosphatidylinositol (PI) to PI4P is the first committed step in the generation of phosphatidylinositol 4,5-bisphosphate (PIP2), a precursor of the second messenger inositol 1,4,5-trisphosphate (InsP3). Undergoes autophosphorylation and phosphorylates serine/threonine residues of protein substrates. Phosphorylates RPN10 and UFD1 in vitro. The sequence is that of Phosphatidylinositol 4-kinase gamma 4 from Arabidopsis thaliana (Mouse-ear cress).